The primary structure comprises 165 residues: Protein SprT (165 aa).

The region spanning 20–162 (EKLAQANLKL…YRCVHCGEQL (143 aa)) is the SprT-like domain. H78 serves as a coordination point for Zn(2+). The active site involves E79. H82 serves as a coordination point for Zn(2+).

It belongs to the SprT family. It depends on Zn(2+) as a cofactor.

It is found in the cytoplasm. The sequence is that of Protein SprT from Escherichia coli (strain SMS-3-5 / SECEC).